A 140-amino-acid polypeptide reads, in one-letter code: MSAPARVPPLDPAILLAISLGGGLGALLRYLISTWWPTPPGHVPWATFVVNVTGCFAIGVLMVLVTEAWVTHRLLRPFAGVGLLGGFTTFSTYGLEIRTLLESGAVLEALGYLAGTVLAALAGVVLGTGAARWATGAARR.

The next 4 membrane-spanning stretches (helical) occupy residues 7 to 27 (VPPL…LGAL), 45 to 65 (WATF…MVLV), 77 to 97 (PFAG…GLEI), and 106 to 126 (VLEA…GVVL). Residues Gly85 and Thr88 each coordinate Na(+).

This sequence belongs to the fluoride channel Fluc/FEX (TC 1.A.43) family.

The protein resides in the cell membrane. The catalysed reaction is fluoride(in) = fluoride(out). With respect to regulation, na(+) is not transported, but it plays an essential structural role and its presence is essential for fluoride channel function. In terms of biological role, fluoride-specific ion channel. Important for reducing fluoride concentration in the cell, thus reducing its toxicity. This chain is Fluoride-specific ion channel FluC 2, found in Nocardia farcinica (strain IFM 10152).